A 78-amino-acid chain; its full sequence is Translational regulator CsrA (78 aa).

The protein belongs to the CsrA/RsmA family. In terms of assembly, homodimer; the beta-strands of each monomer intercalate to form a hydrophobic core, while the alpha-helices form wings that extend away from the core.

The protein localises to the cytoplasm. In terms of biological role, a translational regulator that binds mRNA to regulate translation initiation and/or mRNA stability. Usually binds in the 5'-UTR at or near the Shine-Dalgarno sequence preventing ribosome-binding, thus repressing translation. Its main target seems to be the major flagellin gene, while its function is anatagonized by FliW. The sequence is that of Translational regulator CsrA from Desulfotalea psychrophila (strain LSv54 / DSM 12343).